We begin with the raw amino-acid sequence, 237 residues long: Chalcone--flavanone isomerase (237 aa).

Positions 50 and 192 each coordinate substrate.

Belongs to the chalcone isomerase family.

The catalysed reaction is a chalcone = a flavanone.. It participates in secondary metabolite biosynthesis; flavonoid biosynthesis. Its function is as follows. Catalyzes the intramolecular cyclization of bicyclic chalcones into tricyclic (S)-flavanones. Responsible for the isomerization of 4,2',4',6'-tetrahydroxychalcone (also termed chalcone) into naringenin. The sequence is that of Chalcone--flavanone isomerase (CHI) from Callistephus chinensis (China aster).